We begin with the raw amino-acid sequence, 198 residues long: Adenine phosphoribosyltransferase (198 aa).

It belongs to the purine/pyrimidine phosphoribosyltransferase family. As to quaternary structure, homodimer.

Its subcellular location is the cytoplasm. It carries out the reaction AMP + diphosphate = 5-phospho-alpha-D-ribose 1-diphosphate + adenine. It participates in purine metabolism; AMP biosynthesis via salvage pathway; AMP from adenine: step 1/1. In terms of biological role, catalyzes a salvage reaction resulting in the formation of AMP, that is energically less costly than de novo synthesis. This chain is Adenine phosphoribosyltransferase, found in Serratia proteamaculans (strain 568).